Here is a 127-residue protein sequence, read N- to C-terminus: Glycine cleavage system H protein (127 aa).

Residues 24–105 form the Lipoyl-binding domain; it reads TVKVGISDHA…PYEAWLFAVR (82 aa). K65 carries the post-translational modification N6-lipoyllysine.

Belongs to the GcvH family. The glycine cleavage system is composed of four proteins: P, T, L and H. It depends on (R)-lipoate as a cofactor.

Its function is as follows. The glycine cleavage system catalyzes the degradation of glycine. The H protein shuttles the methylamine group of glycine from the P protein to the T protein. The protein is Glycine cleavage system H protein of Methylococcus capsulatus (strain ATCC 33009 / NCIMB 11132 / Bath).